We begin with the raw amino-acid sequence, 434 residues long: Pectate lyase (434 aa).

An N-terminal signal peptide occupies residues 1 to 22; sequence MKAAQFFLYSLLFFASAALSSA. N-linked (GlcNAc...) asparagine glycosylation is found at asparagine 68 and asparagine 97. Residues aspartate 232, aspartate 256, and aspartate 260 each contribute to the Ca(2+) site. Arginine 312 is an active-site residue.

It belongs to the polysaccharide lyase 1 family. Requires Ca(2+) as cofactor.

The catalysed reaction is Eliminative cleavage of (1-&gt;4)-alpha-D-galacturonan to give oligosaccharides with 4-deoxy-alpha-D-galact-4-enuronosyl groups at their non-reducing ends.. It participates in glycan metabolism; pectin degradation; 2-dehydro-3-deoxy-D-gluconate from pectin: step 2/5. The polypeptide is Pectate lyase (Lilium longiflorum (Trumpet lily)).